The primary structure comprises 274 residues: Probable endonuclease LCL3 (274 aa).

Residues 15–32 (AVLSIILTGSTLTLIYTY) form a helical membrane-spanning segment. The TNase-like domain maps to 53 to 261 (HWLYGKVTSV…RSRKKGLWIQ (209 aa)). Arginine 151 is an active-site residue. Residue aspartate 156 coordinates Ca(2+). Catalysis depends on residues glutamate 159 and arginine 199.

Belongs to the LCL3 family.

Its subcellular location is the mitochondrion. It is found in the membrane. The polypeptide is Probable endonuclease LCL3 (LCL3) (Saccharomyces cerevisiae (strain RM11-1a) (Baker's yeast)).